Reading from the N-terminus, the 631-residue chain is Phosphomethylpyrimidine synthase (631 aa).

Substrate contacts are provided by residues N239, M268, Y297, H333, 353–355 (SRG), 394–397 (DGLR), and E433. H437 serves as a coordination point for Zn(2+). Y460 is a binding site for substrate. Residue H501 coordinates Zn(2+). [4Fe-4S] cluster-binding residues include C581, C584, and C589.

It belongs to the ThiC family. Homodimer. Requires [4Fe-4S] cluster as cofactor.

It catalyses the reaction 5-amino-1-(5-phospho-beta-D-ribosyl)imidazole + S-adenosyl-L-methionine = 4-amino-2-methyl-5-(phosphooxymethyl)pyrimidine + CO + 5'-deoxyadenosine + formate + L-methionine + 3 H(+). Its pathway is cofactor biosynthesis; thiamine diphosphate biosynthesis. Functionally, catalyzes the synthesis of the hydroxymethylpyrimidine phosphate (HMP-P) moiety of thiamine from aminoimidazole ribotide (AIR) in a radical S-adenosyl-L-methionine (SAM)-dependent reaction. In Shigella dysenteriae serotype 1 (strain Sd197), this protein is Phosphomethylpyrimidine synthase.